The sequence spans 439 residues: Histidine--tRNA ligase (439 aa).

This sequence belongs to the class-II aminoacyl-tRNA synthetase family. As to quaternary structure, homodimer.

It is found in the cytoplasm. It carries out the reaction tRNA(His) + L-histidine + ATP = L-histidyl-tRNA(His) + AMP + diphosphate + H(+). The chain is Histidine--tRNA ligase from Leptospira interrogans serogroup Icterohaemorrhagiae serovar copenhageni (strain Fiocruz L1-130).